The sequence spans 158 residues: MYLLNDKVAHELKKPFGKVYKELPSIEGKVVSIGDVTTKHLLSNGIIPDLSILDFKTKRNIPVDIPHKFKTIFEVENPQGCISDEAIERIKYLSTIHDRDMALIIKGEEDLLTIPVIKYFPEDTSVIYGQPDEGMVLLKITDELKQKIEKLLKEMEER.

6 residues coordinate GTP: aspartate 35, valine 36, aspartate 54, lysine 56, glutamate 109, and aspartate 132.

Belongs to the GTP-dependent DPCK family.

The catalysed reaction is 3'-dephospho-CoA + GTP = GDP + CoA + H(+). It functions in the pathway cofactor biosynthesis; coenzyme A biosynthesis. Its function is as follows. Catalyzes the GTP-dependent phosphorylation of the 3'-hydroxyl group of dephosphocoenzyme A to form coenzyme A (CoA). The chain is GTP-dependent dephospho-CoA kinase from Methanococcus maripaludis (strain DSM 14266 / JCM 13030 / NBRC 101832 / S2 / LL).